The primary structure comprises 425 residues: Glucose-1-phosphate adenylyltransferase (425 aa).

Residues Y109, G175, E190–K191, and S208 contribute to the alpha-D-glucose 1-phosphate site.

It belongs to the bacterial/plant glucose-1-phosphate adenylyltransferase family. As to quaternary structure, homotetramer.

The catalysed reaction is alpha-D-glucose 1-phosphate + ATP + H(+) = ADP-alpha-D-glucose + diphosphate. The protein operates within glycan biosynthesis; glycogen biosynthesis. Its function is as follows. Involved in the biosynthesis of ADP-glucose, a building block required for the elongation reactions to produce glycogen. Catalyzes the reaction between ATP and alpha-D-glucose 1-phosphate (G1P) to produce pyrophosphate and ADP-Glc. This chain is Glucose-1-phosphate adenylyltransferase, found in Saccharophagus degradans (strain 2-40 / ATCC 43961 / DSM 17024).